The primary structure comprises 445 residues: Xylose isomerase (445 aa).

Catalysis depends on residues histidine 109 and aspartate 112. Positions 240, 276, 279, 304, 315, 317, and 347 each coordinate Mg(2+).

It belongs to the xylose isomerase family. As to quaternary structure, homotetramer. Requires Mg(2+) as cofactor.

The protein resides in the cytoplasm. The enzyme catalyses alpha-D-xylose = alpha-D-xylulofuranose. This is Xylose isomerase from Xanthomonas oryzae pv. oryzae (strain MAFF 311018).